A 92-amino-acid polypeptide reads, in one-letter code: Large ribosomal subunit protein bL34m (92 aa).

Residues 1 to 46 (MALLAGSLLGPTSRSAALLGGRWLQPRAWLGFPDAWGLPTPQQARG) constitute a mitochondrion transit peptide. Positions 40 to 57 (TPQQARGKSRGNEYQPSN) are enriched in polar residues. The interval 40–63 (TPQQARGKSRGNEYQPSNIKRKNK) is disordered. Residue Ser71 is modified to Phosphoserine.

This sequence belongs to the bacterial ribosomal protein bL34 family. As to quaternary structure, component of the mitochondrial ribosome large subunit (39S) which comprises a 16S rRNA and about 50 distinct proteins.

Its subcellular location is the mitochondrion. The sequence is that of Large ribosomal subunit protein bL34m (MRPL34) from Macaca fascicularis (Crab-eating macaque).